The chain runs to 300 residues: Alpha-tubulin N-acetyltransferase 1 (300 aa).

In terms of domain architecture, N-acetyltransferase spans 1–190 (MEFPFDVDAL…NNFVIFEGFF (190 aa)). An N6-acetyllysine; by autocatalysis modification is found at Lys56. An acetyl-CoA-binding site is contributed by 124–137 (FYIHESLQRHGHGR). N6-acetyllysine; by autocatalysis is present on Lys146. An acetyl-CoA-binding site is contributed by 160 to 169 (SQKLLKFLNK). Lys210 and Lys221 each carry N6-acetyllysine; by autocatalysis. Disordered stretches follow at residues 229-263 (PLNR…RPFV) and 280-300 (TARL…RRTR). Residues Ser249 and Ser253 each carry the phosphoserine modification. Arg282 is subject to Asymmetric dimethylarginine. Ser292 is subject to Phosphoserine. Arg300 carries the omega-N-methylarginine modification.

This sequence belongs to the acetyltransferase ATAT1 family. Component of the BBSome complex. Interacts with AP2 alpha-adaptins, including AP2A2, but not with AP1 gamma-adaptin (AP1G1/AP1G2); this interaction is required for efficient alpha-tubulin acetylation, hence clathrin-coated pits are sites of microtubule acetylation. Autoacetylation strongly increases tubulin acetylation.

The protein localises to the cytoplasm. It is found in the membrane. It localises to the clathrin-coated pit. Its subcellular location is the cell junction. The protein resides in the focal adhesion. The protein localises to the cell projection. It is found in the axon. It localises to the cytoskeleton. Its subcellular location is the spindle. It catalyses the reaction L-lysyl-[alpha-tubulin] + acetyl-CoA = N(6)-acetyl-L-lysyl-[alpha-tubulin] + CoA + H(+). Functionally, specifically acetylates 'Lys-40' in alpha-tubulin on the lumenal side of microtubules. Promotes microtubule destabilization and accelerates microtubule dynamics; this activity may be independent of acetylation activity. Acetylates alpha-tubulin with a slow enzymatic rate, due to a catalytic site that is not optimized for acetyl transfer. Enters the microtubule through each end and diffuses quickly throughout the lumen of microtubules. Acetylates only long/old microtubules because of its slow acetylation rate since it does not have time to act on dynamically unstable microtubules before the enzyme is released. Required for normal sperm flagellar function. Promotes directional cell locomotion and chemotaxis, through AP2A2-dependent acetylation of alpha-tubulin at clathrin-coated pits that are concentrated at the leading edge of migrating cells. May facilitate primary cilium assembly. The polypeptide is Alpha-tubulin N-acetyltransferase 1 (Sus scrofa (Pig)).